A 487-amino-acid chain; its full sequence is UDP-N-acetylmuramate--L-alanine ligase (487 aa).

Residue 122-128 coordinates ATP; the sequence is GTHGKTS.

This sequence belongs to the MurCDEF family.

It localises to the cytoplasm. The enzyme catalyses UDP-N-acetyl-alpha-D-muramate + L-alanine + ATP = UDP-N-acetyl-alpha-D-muramoyl-L-alanine + ADP + phosphate + H(+). It functions in the pathway cell wall biogenesis; peptidoglycan biosynthesis. Cell wall formation. The sequence is that of UDP-N-acetylmuramate--L-alanine ligase from Corynebacterium urealyticum (strain ATCC 43042 / DSM 7109).